A 201-amino-acid polypeptide reads, in one-letter code: Ras-related protein Rab-9A (201 aa).

Residue Ala-2 is modified to N-acetylalanine. Gly-17 serves as a coordination point for GDP. GTP-binding residues include Gly-17, Val-18, Gly-19, Lys-20, Ser-21, Ser-22, Thr-34, His-38, and Thr-39. Gly-19, Lys-20, Ser-21, and Ser-22 together coordinate GDP. Ser-21 serves as a coordination point for Mg(2+). A Switch 1 motif is present at residues 31 to 42 (KFDTQLFHTIGV). Residues Thr-39 and Asp-62 each contribute to the Mg(2+) site. A Switch 2 motif is present at residues 64-78 (AGQERFRSLRTPFYR). 4 residues coordinate GTP: Gly-65, Asn-124, Lys-125, and Asp-127. GDP contacts are provided by Asn-124, Lys-125, Asp-127, Ala-155, and Lys-156. Residue Lys-156 coordinates GTP. Ser-179 carries the post-translational modification Phosphoserine. The residue at position 187 (Thr-187) is a Phosphothreonine. S-geranylgeranyl cysteine attachment occurs at residues Cys-200 and Cys-201.

It belongs to the small GTPase superfamily. Rab family. Interacts (preferentially in its GTP-bound form) with GCC2 (via its GRIP domain). Interacts (GTP-bound form) with SGSM1; the GDP-bound form has much lower affinity for SGSM1. Interacts with SGSM2. The GTP-bound form but not the GDP-bound form interacts with HPS4 and the BLOC-3 complex (heterodimer of HPS1 and HPS4) but does not interact with HPS1 alone. Interacts (GTP-bound form) with NDE1; two RAB9A-GTP molecules lie on the opposite sides of the NDE1 homodimer; the interaction leads to RAB9A-dynein motor tethering. Interacts (GTP-bound form) with NDEL1. Requires Mg(2+) as cofactor.

The protein localises to the cell membrane. The protein resides in the endoplasmic reticulum membrane. It is found in the golgi apparatus membrane. Its subcellular location is the late endosome. It localises to the cytoplasmic vesicle. The protein localises to the phagosome membrane. The protein resides in the phagosome. It is found in the cytoplasmic vesicle membrane. Its subcellular location is the melanosome. It catalyses the reaction GTP + H2O = GDP + phosphate + H(+). Its activity is regulated as follows. Regulated by guanine nucleotide exchange factors (GEFs) which promote the exchange of bound GDP for free GTP. Regulated by GTPase activating proteins (GAPs) which increase the GTP hydrolysis activity. Inhibited by GDP dissociation inhibitors (GDIs). Its function is as follows. The small GTPases Rab are key regulators of intracellular membrane trafficking, from the formation of transport vesicles to their fusion with membranes. Rabs cycle between an inactive GDP-bound form and an active GTP-bound form that is able to recruit to membranes different sets of downstream effectors directly responsible for vesicle formation, movement, tethering and fusion. RAB9A is involved in the transport of proteins between the endosomes and the trans-Golgi network (TGN). Specifically uses NDE1/NDEL1 as an effector to interact with the dynein motor complex in order to control retrograde trafficking of RAB9-associated late endosomes to the TGN. Involved in the recruitment of SGSM2 to melanosomes and is required for the proper trafficking of melanogenic enzymes TYR, TYRP1 and DCT/TYRP2 to melanosomes in melanocytes. This is Ras-related protein Rab-9A (RAB9A) from Canis lupus familiaris (Dog).